The following is a 249-amino-acid chain: Chymase (249 aa).

An N-terminal signal peptide occupies residues 1–19; it reads MHCLPLTLLLLLLCSRAEA. Positions 20-21 are cleaved as a propeptide — activation peptide; sequence EE. Positions 22–245 constitute a Peptidase S1 domain; sequence IIGGTESKPH…YRPWINKVLK (224 aa). A disulfide bridge links Cys51 with Cys67. Catalysis depends on charge relay system residues His66 and Asp110. Cystine bridges form between Cys144-Cys209 and Cys175-Cys188. The active-site Charge relay system is Ser203.

This sequence belongs to the peptidase S1 family. Granzyme subfamily.

It is found in the secreted. The protein resides in the cytoplasmic granule. The enzyme catalyses Preferential cleavage: Phe-|-Xaa &gt; Tyr-|-Xaa &gt; Trp-|-Xaa &gt; Leu-|-Xaa.. In terms of biological role, major secreted protease of mast cells with suspected roles in vasoactive peptide generation, extracellular matrix degradation, and regulation of gland secretion. The polypeptide is Chymase (CMA1) (Canis lupus familiaris (Dog)).